The sequence spans 73 residues: Large ribosomal subunit protein bL31 (73 aa).

The protein belongs to the bacterial ribosomal protein bL31 family. Type A subfamily. Part of the 50S ribosomal subunit. Contacts protein L9.

Binds the 23S rRNA and interacts with the tRNA in the E site. The sequence is that of Large ribosomal subunit protein bL31 (rpmE) from Deinococcus radiodurans (strain ATCC 13939 / DSM 20539 / JCM 16871 / CCUG 27074 / LMG 4051 / NBRC 15346 / NCIMB 9279 / VKM B-1422 / R1).